A 757-amino-acid chain; its full sequence is GTPase-activating protein GYP7 (757 aa).

A Rab-GAP TBC domain is found at 395–640; the sequence is GLEDCIRGEA…SLWEILWTDY (246 aa). The interval 482-507 is disordered; that stretch reads GVGSDRLPTTRESSPETPDEADDDEF. A compositionally biased stretch (acidic residues) spans 498–507; that stretch reads TPDEADDDEF.

Its function is as follows. Most effectively accelerate the intrinsic GTPase activity of YPT7. It is also active, but to a lesser extent, on YPT31, YPT32 and YPT1. YPT6 and SEC4. The protein is GTPase-activating protein GYP7 (GYP7) of Debaryomyces hansenii (strain ATCC 36239 / CBS 767 / BCRC 21394 / JCM 1990 / NBRC 0083 / IGC 2968) (Yeast).